The following is a 544-amino-acid chain: CTP synthase (544 aa).

Residues 1–266 (MTKFIFVTGG…DDLICERFGL (266 aa)) are amidoligase domain. Serine 13 contacts CTP. Serine 13 is a UTP binding site. ATP is bound by residues 14 to 19 (SLGKGI) and aspartate 71. The Mg(2+) site is built by aspartate 71 and glutamate 140. CTP is bound by residues 147–149 (DIE), 187–192 (KTKPTQ), and lysine 223. UTP-binding positions include 187–192 (KTKPTQ) and lysine 223. A Glutamine amidotransferase type-1 domain is found at 291 to 543 (TVAMVGKYVE…VKAAKNYSEA (253 aa)). An L-glutamine-binding site is contributed by glycine 354. Cysteine 381 functions as the Nucleophile; for glutamine hydrolysis in the catalytic mechanism. Residues 382-385 (LGMQ), glutamate 404, and arginine 471 each bind L-glutamine. Active-site residues include histidine 516 and glutamate 518.

The protein belongs to the CTP synthase family. As to quaternary structure, homotetramer.

It catalyses the reaction UTP + L-glutamine + ATP + H2O = CTP + L-glutamate + ADP + phosphate + 2 H(+). The catalysed reaction is L-glutamine + H2O = L-glutamate + NH4(+). It carries out the reaction UTP + NH4(+) + ATP = CTP + ADP + phosphate + 2 H(+). It functions in the pathway pyrimidine metabolism; CTP biosynthesis via de novo pathway; CTP from UDP: step 2/2. Its activity is regulated as follows. Allosterically activated by GTP, when glutamine is the substrate; GTP has no effect on the reaction when ammonia is the substrate. The allosteric effector GTP functions by stabilizing the protein conformation that binds the tetrahedral intermediate(s) formed during glutamine hydrolysis. Inhibited by the product CTP, via allosteric rather than competitive inhibition. Catalyzes the ATP-dependent amination of UTP to CTP with either L-glutamine or ammonia as the source of nitrogen. Regulates intracellular CTP levels through interactions with the four ribonucleotide triphosphates. In Psychrobacter arcticus (strain DSM 17307 / VKM B-2377 / 273-4), this protein is CTP synthase.